Here is a 68-residue protein sequence, read N- to C-terminus: Serine palmitoyltransferase small subunit A (68 aa).

Residues 1-9 (MAFGDAWKQ) lie on the Cytoplasmic side of the membrane. A helical membrane pass occupies residues 10–26 (LSWFYYQYLLVTALYML). The Lumenal portion of the chain corresponds to 27–31 (EPWER). Residues 32 to 54 (TIFNSLLISVAAMAVYTGYVFMP) traverse the membrane as a helical segment. Residues 55–68 (QHIMAILHYFEVVQ) lie on the Cytoplasmic side of the membrane.

It belongs to the SPTSS family. SPTSSA subfamily. Component of the serine palmitoyltransferase (SPT) complex, which is composed of SPTLC1, SPTLC2 or SPTLC3 and SPTSSA or SPTSSB. The heterodimer consisting of SPTLC1 and SPTLC2/SPTLC3 forms the catalytic core of the enzyme, while SPTSSA or SPTSSB subunits determine substrate specificity. SPT also interacts with ORMDL proteins, especially ORMDL3, which negatively regulate SPT activity in the presence of ceramides.

It localises to the endoplasmic reticulum membrane. Its pathway is lipid metabolism; sphingolipid metabolism. Functionally, component of the serine palmitoyltransferase multisubunit enzyme (SPT) that catalyzes the initial and rate-limiting step in sphingolipid biosynthesis by condensing L-serine and activated acyl-CoA (most commonly palmitoyl-CoA) to form long-chain bases. The SPT complex is composed of SPTLC1, SPTLC2 or SPTLC3 and SPTSSA or SPTSSB. Within this complex, the heterodimer consisting of SPTLC1 and SPTLC2/SPTLC3 forms the catalytic core. Within the SPT complex, SPTSSA stimulates the catalytic activity and plays a role in substrate specificity, which depends upon the overall complex composition. The SPTLC1-SPTLC2-SPTSSA complex shows a strong preference for C16-CoA substrate, while the SPTLC1-SPTLC3-SPTSSA isozyme uses both C14-CoA and C16-CoA as substrates, with a slight preference for C14-CoA. Independently of its action as a SPT component, may be involved in MBOAT7 localization to mitochondria-associated membranes, a membrane bridge between the endoplasmic reticulum and mitochondria, may hence affect MBOAT7-catalyzed incorporation of arachidonic acid into phosphatidylinositol. The protein is Serine palmitoyltransferase small subunit A (sptssa) of Danio rerio (Zebrafish).